A 576-amino-acid polypeptide reads, in one-letter code: Sulfite reductase [NADPH] hemoprotein beta-component (576 aa).

[4Fe-4S] cluster contacts are provided by C439, C445, C485, and C489. C489 contacts siroheme.

This sequence belongs to the nitrite and sulfite reductase 4Fe-4S domain family. Alpha(8)-beta(8). The alpha component is a flavoprotein, the beta component is a hemoprotein. The cofactor is siroheme. Requires [4Fe-4S] cluster as cofactor.

The enzyme catalyses hydrogen sulfide + 3 NADP(+) + 3 H2O = sulfite + 3 NADPH + 4 H(+). Its pathway is sulfur metabolism; hydrogen sulfide biosynthesis; hydrogen sulfide from sulfite (NADPH route): step 1/1. In terms of biological role, component of the sulfite reductase complex that catalyzes the 6-electron reduction of sulfite to sulfide. This is one of several activities required for the biosynthesis of L-cysteine from sulfate. In Aliivibrio salmonicida (strain LFI1238) (Vibrio salmonicida (strain LFI1238)), this protein is Sulfite reductase [NADPH] hemoprotein beta-component.